Here is a 401-residue protein sequence, read N- to C-terminus: L-rhamnonate dehydratase (401 aa).

Substrate-binding residues include H29 and R55. Mg(2+)-binding residues include D222, E248, and E276. H325 acts as the Proton acceptor in catalysis. Position 345 (E345) interacts with substrate.

It belongs to the mandelate racemase/muconate lactonizing enzyme family. RhamD subfamily. Homooctamer; tetramer of dimers. Requires Mg(2+) as cofactor.

It carries out the reaction L-rhamnonate = 2-dehydro-3-deoxy-L-rhamnonate + H2O. Functionally, catalyzes the dehydration of L-rhamnonate to 2-keto-3-deoxy-L-rhamnonate (KDR). The polypeptide is L-rhamnonate dehydratase (Klebsiella pneumoniae subsp. pneumoniae (strain ATCC 700721 / MGH 78578)).